A 230-amino-acid polypeptide reads, in one-letter code: Lipoprotein-releasing system ATP-binding protein LolD (230 aa).

Positions 6-230 constitute an ABC transporter domain; that stretch reads LQASNLEKEY…GHFILPSETL (225 aa). 42–49 provides a ligand contact to ATP; it reads GSSGSGKS.

It belongs to the ABC transporter superfamily. Lipoprotein translocase (TC 3.A.1.125) family. As to quaternary structure, the complex is composed of two ATP-binding proteins (LolD) and two transmembrane proteins (LolC and LolE).

The protein localises to the cell inner membrane. Its function is as follows. Part of the ABC transporter complex LolCDE involved in the translocation of mature outer membrane-directed lipoproteins, from the inner membrane to the periplasmic chaperone, LolA. Responsible for the formation of the LolA-lipoprotein complex in an ATP-dependent manner. The polypeptide is Lipoprotein-releasing system ATP-binding protein LolD (Hydrogenovibrio crunogenus (strain DSM 25203 / XCL-2) (Thiomicrospira crunogena)).